Consider the following 305-residue polypeptide: 4-hydroxy-tetrahydrodipicolinate synthase 1 (305 aa).

A pyruvate-binding site is contributed by Thr53. Tyr141 functions as the Proton donor/acceptor in the catalytic mechanism. The active-site Schiff-base intermediate with substrate is Lys169. Val209 is a pyruvate binding site.

Belongs to the DapA family. Homotetramer; dimer of dimers.

It localises to the cytoplasm. It catalyses the reaction L-aspartate 4-semialdehyde + pyruvate = (2S,4S)-4-hydroxy-2,3,4,5-tetrahydrodipicolinate + H2O + H(+). It functions in the pathway amino-acid biosynthesis; L-lysine biosynthesis via DAP pathway; (S)-tetrahydrodipicolinate from L-aspartate: step 3/4. In terms of biological role, catalyzes the condensation of (S)-aspartate-beta-semialdehyde [(S)-ASA] and pyruvate to 4-hydroxy-tetrahydrodipicolinate (HTPA). This chain is 4-hydroxy-tetrahydrodipicolinate synthase 1, found in Streptomyces coelicolor (strain ATCC BAA-471 / A3(2) / M145).